A 139-amino-acid polypeptide reads, in one-letter code: Protein cornichon homolog 4 (139 aa).

3 helical membrane passes run 5-25 (VFLF…YFII), 57-77 (IVTV…NLPV), and 118-138 (LGFY…ALIN).

The protein belongs to the cornichon family. As to quaternary structure, interacts with Sec23/24 complex components SEC24B and SEC24D. Interacts with CCR5. Interacts with ADRB2 in the early secretory pathway.

The protein localises to the membrane. It is found in the endoplasmic reticulum. The protein resides in the endoplasmic reticulum-Golgi intermediate compartment. Its function is as follows. Involved in G protein-coupled receptors (GPCRs) trafficking from the endoplasmic reticulum to the cell surface; it promotes the exit of GPCRs from the early secretory pathway, likely through interaction with the COPII machinery. This Mus musculus (Mouse) protein is Protein cornichon homolog 4 (Cnih4).